We begin with the raw amino-acid sequence, 605 residues long: MHVPPTDPARSAPPASPHRRRRPKALGLTALAAAMLMAVPTTQAAFGSDVRPAAAQEVVGGGDLGPNVLVFDPSTPDIQGKVDEVFRKQESNQFGTDRYALMFKPGTYNDINAQIGFYTSIAGLGLNPDDTTFNGDVTVDAGWFDGNATQNFWRSAENLALNPVNGTNRWAVSQAAPFRRMHVKGGLNLAPDGYGWASGGYIADSKIDGEVGPYSQQQWYTRDSSVGGWGNGVWNMTFSGVEGAPAQSFPEPPYTTLETTPVSREKPFLYLDGDDYKVFVPAKRTNARGTSWGNGTPEGESLPLDQFYVVKPGATAETINAAVDQGLHLLFTPGVYHVDQPIEIDRANTVALGLGLATIIPDNGVTALKVGDVDGVKVAGLLVDAGPVNSETLVEVGSDGASGDHAANPTSLQDVFVRIGGAGPGKATTSIVVNSNDTIIDHTWVWRADHGEGVGWETNRADYGVHVKGDNVLATGLFVEHFNKYDVQWSGENGKTIFYQNEKAYDAPDQAAIQNGDIKGYAAYKVDDSVTTHEGWGMGSYCYFNVNPDIRQQHGFQAPVKPGVKFHDLLVVSLGGKGQYEHVINDIGDPTSGDTTIPSQVVSFP.

Residues 1–23 are disordered; sequence MHVPPTDPARSAPPASPHRRRRP. Positions 1 to 44 are cleaved as a signal peptide; sequence MHVPPTDPARSAPPASPHRRRRPKALGLTALAAAMLMAVPTTQA. Residues glutamine 174, 194-196, glutamine 217, 446-449, and 480-481 each bind substrate; these read YGW, WRAD, and EH. Residue glutamate 502 is the Proton donor of the active site. A substrate-binding site is contributed by tyrosine 505.

This sequence belongs to the glycosyl hydrolase 55 family.

The protein resides in the secreted. It catalyses the reaction Successive hydrolysis of beta-D-glucose units from the non-reducing ends of (1-&gt;3)-beta-D-glucans, releasing alpha-glucose.. Its function is as follows. Exo-beta-1,3-glucanase that specifically hydrolyzes laminarin and laminarioligosaccharides, producing glucose and laminaribiose as end products. This Streptomyces sp. (strain SirexAA-E / ActE) protein is Exo-beta-1,3-glucanase.